Here is a 129-residue protein sequence, read N- to C-terminus: Large ribosomal subunit protein bL19 (129 aa).

It belongs to the bacterial ribosomal protein bL19 family.

Its function is as follows. This protein is located at the 30S-50S ribosomal subunit interface and may play a role in the structure and function of the aminoacyl-tRNA binding site. This Granulibacter bethesdensis (strain ATCC BAA-1260 / CGDNIH1) protein is Large ribosomal subunit protein bL19.